A 295-amino-acid polypeptide reads, in one-letter code: Nucleotide-binding protein PEPE_0450 (295 aa).

Residue 12-19 participates in ATP binding; sequence GMSGAGKT. 62 to 65 lines the GTP pocket; sequence DLRS.

Belongs to the RapZ-like family.

Displays ATPase and GTPase activities. The polypeptide is Nucleotide-binding protein PEPE_0450 (Pediococcus pentosaceus (strain ATCC 25745 / CCUG 21536 / LMG 10740 / 183-1w)).